The chain runs to 505 residues: Glycerol kinase (505 aa).

ADP is bound at residue Thr-12. ATP is bound by residues Thr-12, Thr-13, and Ser-14. Thr-12 serves as a coordination point for sn-glycerol 3-phosphate. Residue Arg-16 coordinates ADP. Sn-glycerol 3-phosphate is bound by residues Arg-82, Glu-83, Tyr-134, and Asp-249. Glycerol-binding residues include Arg-82, Glu-83, Tyr-134, Asp-249, and Gln-250. The ADP site is built by Thr-271 and Gly-315. Residues Thr-271, Gly-315, Gln-319, and Gly-416 each contribute to the ATP site. ADP contacts are provided by Gly-416 and Asn-420.

The protein belongs to the FGGY kinase family.

The catalysed reaction is glycerol + ATP = sn-glycerol 3-phosphate + ADP + H(+). The protein operates within polyol metabolism; glycerol degradation via glycerol kinase pathway; sn-glycerol 3-phosphate from glycerol: step 1/1. Its activity is regulated as follows. Inhibited by fructose 1,6-bisphosphate (FBP). Functionally, key enzyme in the regulation of glycerol uptake and metabolism. Catalyzes the phosphorylation of glycerol to yield sn-glycerol 3-phosphate. The sequence is that of Glycerol kinase from Mycolicibacterium vanbaalenii (strain DSM 7251 / JCM 13017 / BCRC 16820 / KCTC 9966 / NRRL B-24157 / PYR-1) (Mycobacterium vanbaalenii).